The chain runs to 170 residues: ATP synthase subunit b (170 aa).

The helical transmembrane segment at A11–I31 threads the bilayer.

The protein belongs to the ATPase B chain family. As to quaternary structure, F-type ATPases have 2 components, F(1) - the catalytic core - and F(0) - the membrane proton channel. F(1) has five subunits: alpha(3), beta(3), gamma(1), delta(1), epsilon(1). F(0) has three main subunits: a(1), b(2) and c(10-14). The alpha and beta chains form an alternating ring which encloses part of the gamma chain. F(1) is attached to F(0) by a central stalk formed by the gamma and epsilon chains, while a peripheral stalk is formed by the delta and b chains.

It is found in the cell membrane. F(1)F(0) ATP synthase produces ATP from ADP in the presence of a proton or sodium gradient. F-type ATPases consist of two structural domains, F(1) containing the extramembraneous catalytic core and F(0) containing the membrane proton channel, linked together by a central stalk and a peripheral stalk. During catalysis, ATP synthesis in the catalytic domain of F(1) is coupled via a rotary mechanism of the central stalk subunits to proton translocation. Functionally, component of the F(0) channel, it forms part of the peripheral stalk, linking F(1) to F(0). In Listeria welshimeri serovar 6b (strain ATCC 35897 / DSM 20650 / CCUG 15529 / CIP 8149 / NCTC 11857 / SLCC 5334 / V8), this protein is ATP synthase subunit b.